Reading from the N-terminus, the 444-residue chain is MALKVEAKGGKVGIQWDDGSDYHDVTKIYVRGGLEGIQFIKFEYVKAGKKVIGPIHGASGRGFTETFEINNLEKEYLLSIEGYYNASTGVIQCLQFITNKKTYDPIGYNEGARFTLSASRSKIIGFHGFADKYLNSLGAYFIKIPSIQSAIEGAKTTGKGFDDGGDYDGIRKVYVTTDGSAIRHVRFDYDKAGQVETRERGAKTGTQHEFTVNHPYEYITSVEGTYAHTQPYNCVVLTSLTFKTSKGRASPAIGKVTGSKFKLERQGDAIVGFHGRVGSCIDGIGVYYAPLPPSPPPPEKLQGQGGDGGDSWDDGAFKNVKKIYVGQGDVGIAAVKFEYETYTSEVILAERHGKETLLGYEEFELDYPSEYITAVEGCHDKVIGSETGVITMLRFKTNKRNSPPFGLESAFSFILEKDGHKIVGFHGKASTLLHQIGVHVTAIA.

Ala-2 carries the post-translational modification N-acetylalanine. Jacalin-type lectin domains are found at residues Ala-2–Lys-143, Ser-146–Pro-290, and Pro-298–Ala-442.

This sequence belongs to the jacalin lectin family.

The sequence is that of Jacalin-related lectin 11 (JAL11) from Arabidopsis thaliana (Mouse-ear cress).